The following is a 161-amino-acid chain: Nucleotide-binding protein azo2183 (161 aa).

Belongs to the YajQ family.

Its function is as follows. Nucleotide-binding protein. In Azoarcus sp. (strain BH72), this protein is Nucleotide-binding protein azo2183.